A 494-amino-acid chain; its full sequence is Uric acid degradation bifunctional protein PucL (494 aa).

Residues 1–174 (MFTMDDLNQM…EKGETQMKRT (174 aa)) are OHCU decarboxylase. His-68 serves as the catalytic Proton donor; for OHCU decarboxylase activity. 5-hydroxy-2-oxo-4-ureido-2,5-dihydro-1H-imidazole-5-carboxylate-binding positions include Pro-69, 81–85 (SVREQ), and 116–120 (FILAV). Residues 175–494 (MSYGKGNVFA…AAEKCRSLKA (320 aa)) are urate oxidase. Lys-179 functions as the Charge relay system; for urate oxidase activity in the catalytic mechanism. Residue Lys-190 is the Charge relay system of the active site. Thr-239 acts as the Charge relay system; for urate oxidase activity in catalysis. Thr-239, Asp-240, Phe-349, Arg-366, Ile-414, Gln-415, and Asn-441 together coordinate urate.

This sequence in the N-terminal section; belongs to the OHCU decarboxylase family. In the C-terminal section; belongs to the uricase family.

The catalysed reaction is 5-hydroxy-2-oxo-4-ureido-2,5-dihydro-1H-imidazole-5-carboxylate + H(+) = (S)-allantoin + CO2. It carries out the reaction urate + O2 + H2O = 5-hydroxyisourate + H2O2. The protein operates within purine metabolism; urate degradation; (S)-allantoin from urate: step 1/3. It functions in the pathway purine metabolism; urate degradation; (S)-allantoin from urate: step 3/3. Functionally, catalyzes two steps in the degradation of uric acid, i.e. the oxidation of uric acid to 5-hydroxyisourate (HIU) and the stereoselective decarboxylation of 2-oxo-4-hydroxy-4-carboxy-5-ureidoimidazoline (OHCU) to (S)-allantoin. This Bacillus subtilis (strain 168) protein is Uric acid degradation bifunctional protein PucL (pucL).